The primary structure comprises 2500 residues: Non-reducing polyketide synthase atr1 (2500 aa).

Positions 13-260 (VFSPQSKAPK…HNPENANLAL (248 aa)) are N-terminal acylcarrier protein transacylase domain (SAT). The Ketosynthase family 3 (KS3) domain occupies 385-808 (TDAVAVVGMA…GSNSAVLLCQ (424 aa)). Residues Cys-557, His-692, and His-731 each act as for beta-ketoacyl synthase activity in the active site. The tract at residues 908-1199 (MTFSGQSRQS…EFPERHTFLD (292 aa)) is malonyl-CoA:ACP transacylase (MAT) domain. Catalysis depends on Ser-995, which acts as the For acyl/malonyl transferase activity. The interval 1286–1413 (PRLVEPRTKP…GDFGFTTQTQ (128 aa)) is N-terminal hotdog fold. Residues 1286–1584 (PRLVEPRTKP…FTKLPITRLE (299 aa)) enclose the PKS/mFAS DH domain. Residues 1287 to 1583 (RLVEPRTKPS…QFTKLPITRL (297 aa)) are product template (PT) domain. The Proton acceptor; for dehydratase activity role is filled by His-1317. The C-terminal hotdog fold stretch occupies residues 1433 to 1584 (SETLKSKRAY…FTKLPITRLE (152 aa)). The active-site Proton donor; for dehydratase activity is the Asp-1495. Positions 1594–1649 (AHNTPILKSSQQDSIVSASSSSSTEHSDDDSEDDGSRSPSHSDTSVDSESEAPADN) are disordered. The span at 1602–1617 (SSQQDSIVSASSSSST) shows a compositional bias: low complexity. The Carrier domain occupies 1649-1725 (NGAAKKLKSL…RIVAPEMAAK (77 aa)). Ser-1683 is modified (O-(pantetheine 4'-phosphoryl)serine). Residues 2164–2496 (KSYRIETMPY…YEFIFDVVGR (333 aa)) are thioesterase (TE) domain. Active-site for thioesterase activity residues include Ser-2285 and Asp-2434.

The enzyme catalyses 6 malonyl-CoA + 2 acetyl-CoA + 2 S-adenosyl-L-methionine + 3 H(+) = 4-O-demethylbarbatate + 2 S-adenosyl-L-homocysteine + 6 CO2 + 8 CoA + H2O. Its pathway is secondary metabolite biosynthesis; terpenoid biosynthesis. Its function is as follows. Non-reducing polyketide synthase; part of the gene cluster that mediates the biosynthesis of atranorin, a depside of polyketide origin that accumulates in the cortical or medullary layers of lichen thalli. The first step in the pathway is performed by the non-reducing polyketide synthase atr1 that produces 4-O-demethylbarbatic acid composed of two 3-methylorsellinic acid (3MOA) moieties from S-adenosyl-L-methionine (SAM), acetyl-CoA and malonyl-CoA units. The pathway continues with the actions of the cytochrome P450 monooygenase atr2 that catalizes the oxidation of c-9 and the O-methyltransferase atr3 that performs the methylation of the carboxyl group to yield atranorin, via the proatranorin II and III intermediates if atr2 acts first, or the proatranorin I intermediate if atr3 acts first. This Stereocaulon alpinum (Alpine snow lichen) protein is Non-reducing polyketide synthase atr1.